A 211-amino-acid chain; its full sequence is 2,3-bisphosphoglycerate-dependent phosphoglycerate mutase (211 aa).

Residues 9–16 (RHGQSDWN), 22–23 (TG), Arg61, 88–91 (ERDY), Lys99, 115–116 (RR), and 159–160 (GN) each bind substrate. His10 serves as the catalytic Tele-phosphohistidine intermediate. Glu88 functions as the Proton donor/acceptor in the catalytic mechanism.

It belongs to the phosphoglycerate mutase family. BPG-dependent PGAM subfamily. In terms of assembly, homodimer.

It carries out the reaction (2R)-2-phosphoglycerate = (2R)-3-phosphoglycerate. It participates in carbohydrate degradation; glycolysis; pyruvate from D-glyceraldehyde 3-phosphate: step 3/5. In terms of biological role, catalyzes the interconversion of 2-phosphoglycerate and 3-phosphoglycerate. This Rhizobium rhizogenes (strain K84 / ATCC BAA-868) (Agrobacterium radiobacter) protein is 2,3-bisphosphoglycerate-dependent phosphoglycerate mutase.